Reading from the N-terminus, the 358-residue chain is GDSL esterase/lipase At2g30220 (358 aa).

An N-terminal signal peptide occupies residues 1–22; that stretch reads MYISKTIVFGLFVATLLVSCNA. N-linked (GlcNAc...) asparagine glycosylation is present at asparagine 25. The active-site Nucleophile is serine 40. Residues asparagine 102 and asparagine 324 are each glycosylated (N-linked (GlcNAc...) asparagine). Residues aspartate 332 and histidine 335 contribute to the active site.

This sequence belongs to the 'GDSL' lipolytic enzyme family.

The protein resides in the secreted. This is GDSL esterase/lipase At2g30220 from Arabidopsis thaliana (Mouse-ear cress).